A 261-amino-acid chain; its full sequence is MSRKPLIAGNWKMNLNHYEAIALVQKIAFSLPDKYYDRVDVAVIPPFTDLRSVQTLVDGDKLRLTYGAQDLSPHDSGAYTGDVSGAFLAKLGCSYVVVGHSERRTYHNEDDALVAAKAATALKHGLTPIVCIGEHLDVREAGNHVAHNIEQLRGSLAGLLAEQIGSVVTAYEPVWAIGTGRVASAADAQEVCAAIRKELASLASPRIADTVRVLYGGSVNAKNVGDIVAQDDVDGGLVGGASLDGEHFATLAAIAAGGPLP.

N10 to K12 contacts substrate. The active-site Electrophile is H100. The active-site Proton acceptor is E172. Substrate-binding positions include G178, S218, and G239–G240.

The protein belongs to the triosephosphate isomerase family. As to quaternary structure, homodimer.

The protein resides in the cytoplasm. The enzyme catalyses D-glyceraldehyde 3-phosphate = dihydroxyacetone phosphate. Its pathway is carbohydrate biosynthesis; gluconeogenesis. It participates in carbohydrate degradation; glycolysis; D-glyceraldehyde 3-phosphate from glycerone phosphate: step 1/1. Functionally, involved in the gluconeogenesis. Catalyzes stereospecifically the conversion of dihydroxyacetone phosphate (DHAP) to D-glyceraldehyde-3-phosphate (G3P). The chain is Triosephosphate isomerase from Mycobacterium bovis (strain BCG / Pasteur 1173P2).